We begin with the raw amino-acid sequence, 371 residues long: GPI mannosyltransferase 1 (371 aa).

Helical transmembrane passes span F64–I84, A120–L140, I144–V164, I190–G210, A248–F268, V290–S310, L318–L338, and S344–L364.

This sequence belongs to the PIGM family.

The protein resides in the endoplasmic reticulum membrane. Its pathway is glycolipid biosynthesis; glycosylphosphatidylinositol-anchor biosynthesis. Mannosyltransferase involved in glycosylphosphatidylinositol-anchor biosynthesis. Transfers the first alpha-1,4-mannose to GlcN-acyl-PI during GPI precursor assembly. Required for cell wall integrity. This Schizosaccharomyces pombe (strain 972 / ATCC 24843) (Fission yeast) protein is GPI mannosyltransferase 1 (gpi14).